Reading from the N-terminus, the 508-residue chain is 2,3-bisphosphoglycerate-independent phosphoglycerate mutase (508 aa).

Mn(2+) is bound by residues Asp11 and Ser61. Ser61 functions as the Phosphoserine intermediate in the catalytic mechanism. Residues His122, 150–151 (RD), Arg182, Arg188, 257–260 (RPDR), and Lys332 each bind substrate. 5 residues coordinate Mn(2+): Asp397, His401, Asp438, His439, and His456.

This sequence belongs to the BPG-independent phosphoglycerate mutase family. As to quaternary structure, monomer. Requires Mn(2+) as cofactor.

It catalyses the reaction (2R)-2-phosphoglycerate = (2R)-3-phosphoglycerate. It functions in the pathway carbohydrate degradation; glycolysis; pyruvate from D-glyceraldehyde 3-phosphate: step 3/5. Its function is as follows. Catalyzes the interconversion of 2-phosphoglycerate and 3-phosphoglycerate. The polypeptide is 2,3-bisphosphoglycerate-independent phosphoglycerate mutase (Mycoplasma pneumoniae (strain ATCC 29342 / M129 / Subtype 1) (Mycoplasmoides pneumoniae)).